Here is a 262-residue protein sequence, read N- to C-terminus: Sperm microtubule inner protein 6 (262 aa).

The protein belongs to the SPMIP6 family. As to quaternary structure, microtubule inner protein component of sperm flagellar doublet microtubules. Interacts with alpha-tubulin.

It is found in the cytoplasm. Its subcellular location is the cytoskeleton. It localises to the nucleus. The protein localises to the mitochondrion. The protein resides in the flagellum axoneme. May participate in intramanchette transport and midpiece formation of the sperm tail. May play a potential role in somatic cell proliferation. This is Sperm microtubule inner protein 6 (SPMIP6) from Macaca fascicularis (Crab-eating macaque).